Reading from the N-terminus, the 501-residue chain is Na(+)/H(+) antiporter NhaB (501 aa).

Transmembrane regions (helical) follow at residues 24-44, 46-66, 90-110, 145-165, 206-226, 239-259, 302-319, 351-371, 395-415, 450-470, and 478-498; these read VILL…PGVA, WLLI…YPLL, VLTN…IYFM, FLDA…FFSV, LLMH…VGEP, FAGF…AGLA, ALWI…GLAF, FQES…VAVI, MFFI…VATV, VATP…IAPL, and MVIM…YMVT.

It belongs to the NhaB Na(+)/H(+) (TC 2.A.34) antiporter family.

The protein resides in the cell inner membrane. The enzyme catalyses 2 Na(+)(in) + 3 H(+)(out) = 2 Na(+)(out) + 3 H(+)(in). Its function is as follows. Na(+)/H(+) antiporter that extrudes sodium in exchange for external protons. The sequence is that of Na(+)/H(+) antiporter NhaB from Marinobacter nauticus (strain ATCC 700491 / DSM 11845 / VT8) (Marinobacter aquaeolei).